Consider the following 191-residue polypeptide: UPF0312 protein Shewmr7_1249 (191 aa).

A signal peptide spans 1 to 22 (MKKQLLAALIGGFLLAPMAASA).

This sequence belongs to the UPF0312 family. Type 1 subfamily.

Its subcellular location is the periplasm. This chain is UPF0312 protein Shewmr7_1249, found in Shewanella sp. (strain MR-7).